The primary structure comprises 156 residues: Small ribosomal subunit protein uS7 (156 aa).

This sequence belongs to the universal ribosomal protein uS7 family. Part of the 30S ribosomal subunit. Contacts proteins S9 and S11.

In terms of biological role, one of the primary rRNA binding proteins, it binds directly to 16S rRNA where it nucleates assembly of the head domain of the 30S subunit. Is located at the subunit interface close to the decoding center, probably blocks exit of the E-site tRNA. This chain is Small ribosomal subunit protein uS7, found in Bacillus cereus (strain ZK / E33L).